A 537-amino-acid chain; its full sequence is CTP synthase (537 aa).

The tract at residues 1–265 (MTKYIFVTGG…GKYLTKRLKL (265 aa)) is amidoligase domain. Ser13 contributes to the CTP binding site. Ser13 contributes to the UTP binding site. 14-19 (GLGKGI) serves as a coordination point for ATP. Residue Tyr54 coordinates L-glutamine. Asp71 is an ATP binding site. Mg(2+) is bound by residues Asp71 and Glu139. CTP-binding positions include 146–148 (DIE), 186–191 (KTKPTQ), and Lys222. UTP-binding positions include 186–191 (KTKPTQ) and Lys222. Residues 290-532 (EIAIVGKYVK…VRAAKEYKQE (243 aa)) enclose the Glutamine amidotransferase type-1 domain. Gly351 is an L-glutamine binding site. The active-site Nucleophile; for glutamine hydrolysis is Cys378. L-glutamine contacts are provided by residues 379-382 (FGFQ), Glu402, and Arg459. Catalysis depends on residues His505 and Glu507.

It belongs to the CTP synthase family. As to quaternary structure, homotetramer.

It carries out the reaction UTP + L-glutamine + ATP + H2O = CTP + L-glutamate + ADP + phosphate + 2 H(+). The catalysed reaction is L-glutamine + H2O = L-glutamate + NH4(+). The enzyme catalyses UTP + NH4(+) + ATP = CTP + ADP + phosphate + 2 H(+). Its pathway is pyrimidine metabolism; CTP biosynthesis via de novo pathway; CTP from UDP: step 2/2. Its activity is regulated as follows. Allosterically activated by GTP, when glutamine is the substrate; GTP has no effect on the reaction when ammonia is the substrate. The allosteric effector GTP functions by stabilizing the protein conformation that binds the tetrahedral intermediate(s) formed during glutamine hydrolysis. Inhibited by the product CTP, via allosteric rather than competitive inhibition. Its function is as follows. Catalyzes the ATP-dependent amination of UTP to CTP with either L-glutamine or ammonia as the source of nitrogen. Regulates intracellular CTP levels through interactions with the four ribonucleotide triphosphates. The protein is CTP synthase of Pyrococcus furiosus (strain ATCC 43587 / DSM 3638 / JCM 8422 / Vc1).